The following is a 219-amino-acid chain: Putative ankyrin repeat protein BB_0399 (219 aa).

ANK repeat units lie at residues 104 to 133 (YKIS…SLNQ), 137 to 166 (TGYS…DLSF), and 170 to 199 (NRKT…YIDD).

The polypeptide is Putative ankyrin repeat protein BB_0399 (Borreliella burgdorferi (strain ATCC 35210 / DSM 4680 / CIP 102532 / B31) (Borrelia burgdorferi)).